We begin with the raw amino-acid sequence, 580 residues long: Formate--tetrahydrofolate ligase (580 aa).

An ATP-binding site is contributed by 83 to 90 (TPMGEGKT).

It belongs to the formate--tetrahydrofolate ligase family.

It carries out the reaction (6S)-5,6,7,8-tetrahydrofolate + formate + ATP = (6R)-10-formyltetrahydrofolate + ADP + phosphate. The protein operates within one-carbon metabolism; tetrahydrofolate interconversion. The chain is Formate--tetrahydrofolate ligase from Haloquadratum walsbyi (strain DSM 16790 / HBSQ001).